Reading from the N-terminus, the 130-residue chain is Spore coat protein M (130 aa).

Its function is as follows. Involved in spore outer coat assembly. May be part of a cross-linked insoluble skeleton that surrounds the spore, serves as a matrix for the assembly of additional outer coat material, and confers structural stability to the final structure. This Bacillus subtilis (strain 168) protein is Spore coat protein M (cotM).